The sequence spans 193 residues: Zinc finger protein AZF3 (193 aa).

2 consecutive C2H2-type zinc fingers follow at residues 75–97 (YKCG…KASH) and 118–140 (HVCS…KRCH).

As to expression, expressed in roots.

The protein localises to the nucleus. Transcriptional repressor probably involved in abiotic stress responses. Binds DNA in a sequence-specific manner and can repress the transactivation activity of other transcription factors. This chain is Zinc finger protein AZF3 (AZF3), found in Arabidopsis thaliana (Mouse-ear cress).